A 475-amino-acid polypeptide reads, in one-letter code: Ribulose bisphosphate carboxylase large chain (475 aa).

Positions 1–2 (MS) are excised as a propeptide. Pro-3 is subject to N-acetylproline. Lys-14 is modified (N6,N6,N6-trimethyllysine). Residues Asn-123 and Thr-173 each contribute to the substrate site. Residue Lys-175 is the Proton acceptor of the active site. Residue Lys-177 participates in substrate binding. Residues Lys-201, Asp-203, and Glu-204 each coordinate Mg(2+). At Lys-201 the chain carries N6-carboxylysine. His-294 functions as the Proton acceptor in the catalytic mechanism. Residues Arg-295, His-327, and Ser-379 each coordinate substrate.

It belongs to the RuBisCO large chain family. Type I subfamily. Heterohexadecamer of 8 large chains and 8 small chains; disulfide-linked. The disulfide link is formed within the large subunit homodimers. Mg(2+) is required as a cofactor. The disulfide bond which can form in the large chain dimeric partners within the hexadecamer appears to be associated with oxidative stress and protein turnover.

It is found in the plastid. The protein resides in the chloroplast. The catalysed reaction is 2 (2R)-3-phosphoglycerate + 2 H(+) = D-ribulose 1,5-bisphosphate + CO2 + H2O. The enzyme catalyses D-ribulose 1,5-bisphosphate + O2 = 2-phosphoglycolate + (2R)-3-phosphoglycerate + 2 H(+). Its function is as follows. RuBisCO catalyzes two reactions: the carboxylation of D-ribulose 1,5-bisphosphate, the primary event in carbon dioxide fixation, as well as the oxidative fragmentation of the pentose substrate in the photorespiration process. Both reactions occur simultaneously and in competition at the same active site. The polypeptide is Ribulose bisphosphate carboxylase large chain (Viscum album (European mistletoe)).